The sequence spans 115 residues: MSSPCLDRLAALSSAEEFFQVLDLPYAPEVLRVARLHILKRMGQYLATTSFAGLDDDAVRRAARDTLERAYRDFATSTPLAERVFKVLREHDPERPPARGAFVPLADILHPLTQS.

Belongs to the NifW family. As to quaternary structure, homotrimer; associates with NifD.

In terms of biological role, may protect the nitrogenase Fe-Mo protein from oxidative damage. The sequence is that of Nitrogenase-stabilizing/protective protein NifW from Methylobacterium sp. (strain 4-46).